We begin with the raw amino-acid sequence, 140 residues long: uncharacterized protein (140 aa).

It belongs to the peptidase S24 family.

This is an uncharacterized protein from Haemophilus influenzae (strain ATCC 51907 / DSM 11121 / KW20 / Rd).